Consider the following 106-residue polypeptide: Large ribosomal subunit protein bL21 (106 aa).

The protein belongs to the bacterial ribosomal protein bL21 family. Part of the 50S ribosomal subunit. Contacts protein L20.

This protein binds to 23S rRNA in the presence of protein L20. In Chlamydia caviae (strain ATCC VR-813 / DSM 19441 / 03DC25 / GPIC) (Chlamydophila caviae), this protein is Large ribosomal subunit protein bL21.